Here is a 1249-residue protein sequence, read N- to C-terminus: Myosin-1 (1249 aa).

Residues 1–42 are disordered; it reads MGHSRRPAGGEKKSRGFGRSKAVADVGDGRQTGGKPQVKKAT. One can recognise a Myosin motor domain in the interval 51 to 730; it reads IGVSDLTLLS…TLFALEAMRD (680 aa). 144–151 lines the ATP pocket; that stretch reads GESGAGKT. Residue serine 372 is modified to Phosphoserine. The tract at residues 419-501 is actin-binding; sequence SIGILDIYGF…PGVFAALNDA (83 aa). IQ domains follow at residues 734-754 and 755-780; these read HNMAIRIQRAWRNYLRYRTEC and AIRIQRFWRRTTGGLEFIKLRDQGHQ. Residues 788-978 enclose the TH1 domain; sequence RRRMSLLGSR…TIHTGPGEPA (191 aa). Disordered regions lie at residues 962–1079 and 1126–1249; these read DDSY…PKKP and WTPE…DDDW. Pro residues predominate over residues 1021–1035; that stretch reads AAQPLPRATPQPAEP. Over residues 1036-1051 the composition is skewed to low complexity; it reads QPAARAVPQPVAAVAA. Pro residues-rich tracts occupy residues 1064-1077 and 1139-1150; these read APPPPPPAAAPAPK and TPKPAPPPPPAA. Residues 1076-1137 form the SH3 domain; sequence PKKPTAKVLY…PEAYLEEQVA (62 aa). Residues 1151–1169 are compositionally biased toward low complexity; sequence PRSTPAPATNGAAAAAKAK. The span at 1200-1221 shows a compositional bias: polar residues; that stretch reads VSMNSHDSSGGSGRGTPNSMSN. Low complexity predominate over residues 1222-1231; sequence ASLAGGLAEA.

The protein belongs to the TRAFAC class myosin-kinesin ATPase superfamily. Myosin family. Phosphorylation of the TEDS site (Ser-372) is required for the polarization of the actin cytoskeleton. Phosphorylation probably activates the myosin-I ATPase activity.

Its subcellular location is the cytoplasm. It localises to the cytoskeleton. The protein localises to the actin patch. Type-I myosin implicated in the organization of the actin cytoskeleton. Required for proper actin cytoskeleton polarization. At the cell cortex, assembles in patch-like structures together with proteins from the actin-polymerizing machinery and promotes actin assembly. Functions as actin nucleation-promoting factor (NPF) for the Arp2/3 complex. Plays an important role in polarized growth, spore germination, hyphal morphogenesis, and septal wall formation. The chain is Myosin-1 (myoA) from Aspergillus fumigatus (strain ATCC MYA-4609 / CBS 101355 / FGSC A1100 / Af293) (Neosartorya fumigata).